Here is a 725-residue protein sequence, read N- to C-terminus: RNA-directed RNA polymerase (725 aa).

A RdRp catalytic domain is found at 424 to 544 (PVGIGMDASR…VVERSDEKKV (121 aa)).

It belongs to the tombusviridae RNA polymerase family.

The enzyme catalyses RNA(n) + a ribonucleoside 5'-triphosphate = RNA(n+1) + diphosphate. In terms of biological role, RNA-dependent RNA polymerase that plays an essential role in the virus replication. The polypeptide is RNA-directed RNA polymerase (Chenopodium amaranticolor (Quinoa)).